A 110-amino-acid chain; its full sequence is Multidrug transporter PA4990 (110 aa).

4 helical membrane passes run 7-27 (LAIA…VAGF), 31-51 (LPLL…VLVM), 58-78 (VVYA…AMFV), and 85-105 (PAAL…QLFS).

It belongs to the drug/metabolite transporter (DMT) superfamily. Small multidrug resistance (SMR) (TC 2.A.7.1) family.

Its subcellular location is the cell membrane. Confers resistance to ethidium bromide, acriflavine and methyl viologen. This Pseudomonas aeruginosa (strain ATCC 15692 / DSM 22644 / CIP 104116 / JCM 14847 / LMG 12228 / 1C / PRS 101 / PAO1) protein is Multidrug transporter PA4990.